The sequence spans 886 residues: Neurotrophin 1 (886 aa).

An N-terminal signal peptide occupies residues 1–29 (MKAGRAFGCLFWALLYCVLYLDLVSGNSA). A propeptide spanning residues 30 to 498 (DDELMDFDFA…FDDFSLSKKR (469 aa)) is cleaved from the precursor. Residues Asn-267 and Asn-317 are each glycosylated (N-linked (GlcNAc...) asparagine). The disordered stretch occupies residues 321–340 (FQQPSSQEEEKMASSNGGQS). Asn-353 carries an N-linked (GlcNAc...) asparagine glycan. Positions 369–436 (RNSAEETEEP…HKPVVTPPNK (68 aa)) are disordered. The 90-residue stretch at 508–597 (MCQSVVRYAR…KVPTCCSCQV (90 aa)) folds into the Spaetzle domain. 3 disulfides stabilise this stretch: Cys-509/Cys-564, Cys-546/Cys-593, and Cys-553/Cys-595. A glycan (N-linked (GlcNAc...) asparagine) is linked at Asn-623. Disordered regions lie at residues 675–754 (PGIS…QYHR) and 789–886 (VSAP…QSIQ). Low complexity predominate over residues 698–710 (YKSSSSSSKKYYS). Pro residues predominate over residues 797–807 (PAPPLPMPPMP). Basic residues-rich tracts occupy residues 815–827 (HQAHHQQPHHHLH) and 874–886 (SRRHYHNRRQSIQ).

Homodimer; disulfide-linked. As to expression, detected in the fan-shaped body which is a component of the locomotion center in the central nervous system (CNS) (at protein level). Expressed in the optic lobes and brain.

Its function is as follows. Neurotrophin which may function as a ligand for the Toll-related receptors Toll-7 and Tollo. Binds to Toll-7 and probably acts as its ligand in promoting motor axon targeting and neuronal survival in the central nervous system (CNS). Involved in synaptic targeting of ISNb/d motorneurons and also some SNa motorneurons. In larvae, involved in the negative regulation of the tracheal immune response to bacterial infection perhaps by acting as a ligand for the Toll-related receptor Tollo. May be involved in the normal development of specific neurons at the neuromuscular junction. The chain is Neurotrophin 1 from Drosophila melanogaster (Fruit fly).